A 200-amino-acid chain; its full sequence is Crossover junction endodeoxyribonuclease RuvC (200 aa).

Residues D18, E78, and D151 contribute to the active site. Mg(2+)-binding residues include D18, E78, and D151.

It belongs to the RuvC family. Homodimer which binds Holliday junction (HJ) DNA. The HJ becomes 2-fold symmetrical on binding to RuvC with unstacked arms; it has a different conformation from HJ DNA in complex with RuvA. In the full resolvosome a probable DNA-RuvA(4)-RuvB(12)-RuvC(2) complex forms which resolves the HJ. Requires Mg(2+) as cofactor.

It is found in the cytoplasm. The enzyme catalyses Endonucleolytic cleavage at a junction such as a reciprocal single-stranded crossover between two homologous DNA duplexes (Holliday junction).. In terms of biological role, the RuvA-RuvB-RuvC complex processes Holliday junction (HJ) DNA during genetic recombination and DNA repair. Endonuclease that resolves HJ intermediates. Cleaves cruciform DNA by making single-stranded nicks across the HJ at symmetrical positions within the homologous arms, yielding a 5'-phosphate and a 3'-hydroxyl group; requires a central core of homology in the junction. The consensus cleavage sequence is 5'-(A/T)TT(C/G)-3'. Cleavage occurs on the 3'-side of the TT dinucleotide at the point of strand exchange. HJ branch migration catalyzed by RuvA-RuvB allows RuvC to scan DNA until it finds its consensus sequence, where it cleaves and resolves the cruciform DNA. The sequence is that of Crossover junction endodeoxyribonuclease RuvC from Cytophaga hutchinsonii (strain ATCC 33406 / DSM 1761 / CIP 103989 / NBRC 15051 / NCIMB 9469 / D465).